Consider the following 49-residue polypeptide: Large ribosomal subunit protein bL32 (49 aa).

This sequence belongs to the bacterial ribosomal protein bL32 family.

This Nitratiruptor sp. (strain SB155-2) protein is Large ribosomal subunit protein bL32.